Here is a 1080-residue protein sequence, read N- to C-terminus: Kinesin-like protein KIN-14E (1080 aa).

The disordered stretch occupies residues 1 to 35 (MDFSWTTGWEKAAADDDEAESAPAPAPPAPSPQEA). Residues 247 to 355 (QTRTSKLISK…KQEQTLLSLE (109 aa)) are a coiled coil. The region spanning 407–729 (NIRVFCRCRP…LNFASRVRRI (323 aa)) is the Kinesin motor domain. 490–497 (GQTGTGKT) is an ATP binding site. A coiled-coil region spans residues 736–893 (KQVDTAELQK…EHHRSVAESK (158 aa)). The span at 960–970 (AMSEKEQHILR) shows a compositional bias: basic and acidic residues. The segment at 960–1080 (AMSEKEQHIL…AVNKTRGWVR (121 aa)) is disordered. A compositionally biased stretch (polar residues) spans 971-985 (SSDSMNKKVTNNSSI). Residues 1047–1059 (TATSKTAAATHKT) are compositionally biased toward low complexity.

Belongs to the TRAFAC class myosin-kinesin ATPase superfamily. Kinesin family. KIN-14 subfamily.

The sequence is that of Kinesin-like protein KIN-14E from Oryza sativa subsp. japonica (Rice).